A 312-amino-acid chain; its full sequence is Olfactory receptor 2L13 (312 aa).

Over 1–24 (MEKWNHTSNDFILLGLLPPNQTGI) the chain is Extracellular. N-linked (GlcNAc...) asparagine glycosylation is found at Asn-5 and Asn-20. The chain crosses the membrane as a helical span at residues 25–48 (FLLCLIILIFFLASVGNSAMIHLI). Residues 49 to 56 (HVDPRLHT) lie on the Cytoplasmic side of the membrane. A helical transmembrane segment spans residues 57-78 (PMYFLLSQLSLMDLMYISTTVP). Residues 79–99 (KMAYNFLSGQKGISFLGCGVQ) lie on the Extracellular side of the membrane. Cys-96 and Cys-188 are oxidised to a cystine. Residues 100-119 (SFFFLTMACSEGLLLTSMAY) traverse the membrane as a helical segment. At 120 to 138 (DRYLAICHSLYYPIRMSKM) the chain is on the cytoplasmic side. The chain crosses the membrane as a helical span at residues 139-157 (MCVKMIGGSWTLGSINSLA). The Extracellular segment spans residues 158-194 (HTVFALHIPYCRSRAIDHFFCDVPAMLLLACTDTWVY). Residues 195 to 218 (EYMVFVSTSLFLLFPFIGITSSCG) form a helical membrane-spanning segment. The Cytoplasmic portion of the chain corresponds to 219–235 (RVLFAVYHMHSKEGRKK). A helical transmembrane segment spans residues 236 to 258 (AFTTISTHLTVVIFYYAPFVYTY). Over 259–271 (LRPRNLRSPAEDK) the chain is Extracellular. The helical transmembrane segment at 272-291 (ILAVFYTILTPMLNPIIYSL) threads the bilayer. The Cytoplasmic portion of the chain corresponds to 292–312 (RNKEVLGAMRRVFGIFSFLKE).

This sequence belongs to the G-protein coupled receptor 1 family.

It localises to the cell membrane. In terms of biological role, odorant receptor. This chain is Olfactory receptor 2L13 (OR2L13), found in Homo sapiens (Human).